The following is a 132-amino-acid chain: Agouti-signaling protein (132 aa).

The signal sequence occupies residues 1–22; sequence MDVTRLLLATLLVFLCFFTAYS. The N-linked (GlcNAc...) asparagine glycan is linked to asparagine 39. Positions 57 to 88 are disordered; the sequence is KKSKQTSRKEAEKKRSSKKEASMKKVARPRTP. The span at 63 to 79 shows a compositional bias: basic and acidic residues; it reads SRKEAEKKRSSKKEASM. Disulfide bonds link cysteine 93/cysteine 108, cysteine 100/cysteine 114, cysteine 107/cysteine 125, cysteine 111/cysteine 132, and cysteine 116/cysteine 123. Positions 93–132 constitute an Agouti domain; sequence CVATRDSCKPPAPACCDPCASCQCRFFRSACSCRVLSLNC.

Its subcellular location is the secreted. In terms of biological role, involved in the regulation of melanogenesis. The binding of ASP to MC1R precludes alpha-MSH initiated signaling and thus blocks production of cAMP, leading to a down-regulation of eumelanogenesis (brown/black pigment) and thus increasing synthesis of pheomelanin (yellow/red pigment). This Macaca assamensis (Assam macaque) protein is Agouti-signaling protein (ASIP).